The sequence spans 559 residues: MAAVGASATPLTNTKSTAEPVRPVANFPPSVWGDLFLSFSLDKSIMEEYAEAMEEPKEQVRRLILDPTMDSNKKLSLIYTVHRLGLTYMFLKEIEAQLDRLFKEFNLEDYVELDLYTISINFQAFRHLGYKLPCDVFNKFKNDDSTTFKESITGDVRGMLGLYESAQLRLKGENILDEASAFAETKLKSLVNTLEGSLAQQVKQSLRRPFHQGMPMVEARLYFSNYQEECSAHDSILKLAKLHFNYLQLQQKEELRIVSQWWKDMRFQETTPYIRDRVPEIYLWILGLYFEPRYSLARIIATKITLFLVVLDDTYDAYATIEEIRLLTDAINRWDISAMNQIPEYIRPFYKILLDEYAELEKQLAKEGRANSVIASKEAFQDIARGYLEEAEWTNSGYVASFPEYMKNGLITSAYNVISKSALVGMGEIVSEDALVWYESHPQILQASELISRLQDDVMTYQFERERGQSATGVDSYIKTYGVSEKVAIDELKKMIENAWKEINEGCLKPREVSMDLLAPILNLARMIDVVYRYDDGFTFPGKTLKEYITLLFVGSSPM.

Mg(2+)-binding residues include Asp312, Asp316, Asp456, Thr460, and Glu464. The DDXXD motif signature appears at Asp312–Asp316.

The protein belongs to the terpene synthase family. Monomer. The cofactor is Mg(2+). Mainly expressed in sunflower trichomes.

It carries out the reaction (2E,6E)-farnesyl diphosphate = (+)-(R)-germacrene A + diphosphate. The protein operates within secondary metabolite biosynthesis; terpenoid biosynthesis. Its function is as follows. Sesquiterpene synthase involved in germacrene A biosynthesis. Germacrene A is a precursor of several sesquiterpene lactones. The protein is Germacrene A synthase 1 of Helianthus annuus (Common sunflower).